The sequence spans 372 residues: Gibberellin 20 oxidase 1 (372 aa).

Residues 209–309 (RNDSIMRLNY…RRSLAFFLCP (101 aa)) enclose the Fe2OG dioxygenase domain. Residues His234, Asp236, and His290 each contribute to the Fe cation site. Arg300 is a catalytic residue.

It belongs to the iron/ascorbate-dependent oxidoreductase family. GA20OX subfamily. Requires Fe(2+) as cofactor. L-ascorbate is required as a cofactor. As to expression, preferentially expressed in reproductive organs. Expressed in the epithelium of embryos and the tapetum of anthers. Expressed at low levels in the shoot apical meristem.

The enzyme catalyses gibberellin A12 + 2 2-oxoglutarate + 3 O2 + H(+) = gibberellin A9 + 2 succinate + 3 CO2 + 2 H2O. It catalyses the reaction gibberellin A53 + 2 2-oxoglutarate + 3 O2 + H(+) = gibberellin A20 + 2 succinate + 3 CO2 + 2 H2O. Its function is as follows. Key oxidase enzyme in the biosynthesis of gibberellin. Catalyzes the conversion of GA12 and GA53 to GA9 and GA20 respectively, via a three-step oxidation at C-20 of the GA skeleton. The sequence is that of Gibberellin 20 oxidase 1 from Oryza sativa subsp. japonica (Rice).